Here is a 122-residue protein sequence, read N- to C-terminus: MIQQESRLKVADNSGAREILVIKILGGSRVKTGNIGDIIVATVKQATPGGVVKKGDVVKAVVVRTKHGIHRKDGSYIKFDENAAVLINNDKSPKGTRIFGPIARELRGDDFMKIVSLAPEVL.

It belongs to the universal ribosomal protein uL14 family. As to quaternary structure, part of the 50S ribosomal subunit. Forms a cluster with proteins L3 and L19. In the 70S ribosome, L14 and L19 interact and together make contacts with the 16S rRNA in bridges B5 and B8.

Its function is as follows. Binds to 23S rRNA. Forms part of two intersubunit bridges in the 70S ribosome. The protein is Large ribosomal subunit protein uL14 of Limosilactobacillus reuteri (strain DSM 20016) (Lactobacillus reuteri).